The chain runs to 106 residues: Large ribosomal subunit protein eL42 (106 aa).

A compositionally biased stretch (basic residues) spans 1 to 29 (MVNIPKTRRTYCKGKACRKHTPHKVTQYK). The interval 1–56 (MVNIPKTRRTYCKGKACRKHTPHKVTQYKKGKDSLSAQGKRRYDRKQSGYGGQTKP) is disordered.

Belongs to the eukaryotic ribosomal protein eL42 family.

The sequence is that of Large ribosomal subunit protein eL42 (RPL44) from Cryptococcus neoformans var. neoformans serotype D (strain B-3501A) (Filobasidiella neoformans).